We begin with the raw amino-acid sequence, 553 residues long: ATP synthase F(1) complex subunit alpha, mitochondrial (553 aa).

The N-terminal 43 residues, 1–43, are a transit peptide targeting the mitochondrion; the sequence is MLSVRVAAAVARALPRRAGLVSKNALGSSFIAARNLHASNSRL. The residue at position 44 (Gln-44) is a Pyrrolidone carboxylic acid. A phosphoserine mark is found at Ser-53 and Ser-65. Ser-76 carries the post-translational modification Phosphoserine; alternate. Residue Ser-76 is glycosylated (O-linked (GlcNAc) serine; alternate). Position 106 is a phosphoserine (Ser-106). An N6-acetyllysine mark is found at Lys-123, Lys-126, and Lys-132. Thr-134 carries the post-translational modification Phosphothreonine. Lys-161 carries the N6-acetyllysine; alternate modification. Position 161 is an N6-succinyllysine; alternate (Lys-161). The residue at position 166 (Ser-166) is a Phosphoserine. N6-acetyllysine; alternate is present on Lys-167. Position 167 is an N6-succinyllysine; alternate (Lys-167). Residue Ser-184 is modified to Phosphoserine. An Omega-N-methylarginine modification is found at Arg-204. 5 residues coordinate ATP: Gln-215, Gly-217, Lys-218, Thr-219, and Ser-220. A Mg(2+)-binding site is contributed by Thr-219. N6-acetyllysine; alternate occurs at positions 230 and 239. N6-succinyllysine; alternate occurs at positions 230 and 239. At Lys-240 the chain carries N6-acetyllysine. 2 positions are modified to N6-acetyllysine; alternate: Lys-261 and Lys-305. N6-succinyllysine; alternate occurs at positions 261 and 305. Mg(2+) is bound at residue Asp-312. Lys-427 carries the post-translational modification N6-acetyllysine; alternate. Residue Lys-427 is modified to N6-succinyllysine; alternate. The residue at position 434 (Lys-434) is an N6-acetyllysine. 2 residues coordinate ATP: Gln-473 and Gln-475. N6-acetyllysine; alternate is present on residues Lys-498, Lys-506, Lys-531, and Lys-539. N6-succinyllysine; alternate occurs at positions 498, 506, 531, and 539. Lys-541 is subject to N6-acetyllysine.

Belongs to the ATPase alpha/beta chains family. As to quaternary structure, homotrimer. Component of the ATP synthase complex composed at least of ATP5F1A/subunit alpha, ATP5F1B/subunit beta, ATP5MC1/subunit c (homooctomer), MT-ATP6/subunit a, MT-ATP8/subunit 8, ATP5ME/subunit e, ATP5MF/subunit f, ATP5MG/subunit g, ATP5MK/subunit k, ATP5MJ/subunit j, ATP5F1C/subunit gamma, ATP5F1D/subunit delta, ATP5F1E/subunit epsilon, ATP5PF/subunit F6, ATP5PB/subunit b, ATP5PD/subunit d, ATP5PO/subunit OSCP. ATP synthase complex consists of a soluble F(1) head domain (subunits alpha(3) and beta(3)) - the catalytic core - and a membrane F(0) domain - the membrane proton channel (subunits c, a, 8, e, f, g, k and j). These two domains are linked by a central stalk (subunits gamma, delta, and epsilon) rotating inside the F1 region and a stationary peripheral stalk (subunits F6, b, d, and OSCP). Interacts with ATPAF2. Interacts with HRG; the interaction occurs on the surface of T-cells and alters the cell morphology when associated with concanavalin (in vitro). Interacts with PLG (angiostatin peptide); the interaction inhibits most of the angiogenic properties of angiostatin. Interacts with BLOC1S1. Interacts with BCL2L1 isoform BCL-X(L); the interaction mediates the association of BCL2L1 isoform BCL-X(L) with the mitochondrial membrane F(1)F(0) ATP synthase and enhances neurons metabolic efficiency. Interacts with CLN5 and PPT1. Interacts with S100A1; this interaction increases F1-ATPase activity. Interacts with ABCB7; this interaction allows the regulation of cellular iron homeostasis and cellular reactive oxygen species (ROS) levels in cardiomyocytes. Acetylated on lysine residues. BLOC1S1 is required for acetylation. In terms of tissue distribution, heart muscle (at protein level). Heart and liver.

The protein resides in the mitochondrion inner membrane. It is found in the cell membrane. In terms of biological role, subunit alpha, of the mitochondrial membrane ATP synthase complex (F(1)F(0) ATP synthase or Complex V) that produces ATP from ADP in the presence of a proton gradient across the membrane which is generated by electron transport complexes of the respiratory chain. ATP synthase complex consist of a soluble F(1) head domain - the catalytic core - and a membrane F(1) domain - the membrane proton channel. These two domains are linked by a central stalk rotating inside the F(1) region and a stationary peripheral stalk. During catalysis, ATP synthesis in the catalytic domain of F(1) is coupled via a rotary mechanism of the central stalk subunits to proton translocation. In vivo, can only synthesize ATP although its ATP hydrolase activity can be activated artificially in vitro. With the catalytic subunit beta (ATP5F1B), forms the catalytic core in the F(1) domain. Subunit alpha does not bear the catalytic high-affinity ATP-binding sites. The sequence is that of ATP synthase F(1) complex subunit alpha, mitochondrial from Bos taurus (Bovine).